The sequence spans 89 residues: Small ribosomal subunit protein uS15 (89 aa).

This sequence belongs to the universal ribosomal protein uS15 family. As to quaternary structure, part of the 30S ribosomal subunit. Forms a bridge to the 50S subunit in the 70S ribosome, contacting the 23S rRNA.

One of the primary rRNA binding proteins, it binds directly to 16S rRNA where it helps nucleate assembly of the platform of the 30S subunit by binding and bridging several RNA helices of the 16S rRNA. Functionally, forms an intersubunit bridge (bridge B4) with the 23S rRNA of the 50S subunit in the ribosome. The chain is Small ribosomal subunit protein uS15 from Arthrobacter sp. (strain FB24).